Consider the following 40-residue polypeptide: Thioredoxin (40 aa).

Residues Cys29 and Cys32 are joined by a disulfide bond.

It belongs to the thioredoxin family.

In terms of biological role, participates in various redox reactions through the reversible oxidation of its active center dithiol to a disulfide and catalyzes dithiol-disulfide exchange reactions. The protein is Thioredoxin (trxA) of Clostridium sporogenes.